The sequence spans 332 residues: Ornithine carbamoyltransferase, catabolic (332 aa).

Carbamoyl phosphate contacts are provided by residues 60–63 (STRT), Gln-87, Arg-111, and 138–141 (HPTQ). L-ornithine is bound by residues Asn-170, Asp-230, and 234–235 (SM). Carbamoyl phosphate is bound by residues 271-272 (CL) and Arg-316.

This sequence belongs to the aspartate/ornithine carbamoyltransferase superfamily. OTCase family.

The protein resides in the cytoplasm. It catalyses the reaction carbamoyl phosphate + L-ornithine = L-citrulline + phosphate + H(+). It functions in the pathway amino-acid degradation; L-arginine degradation via ADI pathway; carbamoyl phosphate from L-arginine: step 2/2. Its function is as follows. Reversibly catalyzes the transfer of the carbamoyl group from carbamoyl phosphate (CP) to the N(epsilon) atom of ornithine (ORN) to produce L-citrulline. This is Ornithine carbamoyltransferase, catabolic from Bacillus cereus (strain ATCC 10987 / NRS 248).